The primary structure comprises 337 residues: tRNA dimethylallyltransferase (337 aa).

24 to 31 (GPTGAGKT) is a binding site for ATP. Position 26 to 31 (26 to 31 (TGAGKT)) interacts with substrate. 2 interaction with substrate tRNA regions span residues 49 to 52 (DSRQ) and 188 to 192 (QRAVR).

Belongs to the IPP transferase family. As to quaternary structure, monomer. Mg(2+) is required as a cofactor.

The enzyme catalyses adenosine(37) in tRNA + dimethylallyl diphosphate = N(6)-dimethylallyladenosine(37) in tRNA + diphosphate. Its function is as follows. Catalyzes the transfer of a dimethylallyl group onto the adenine at position 37 in tRNAs that read codons beginning with uridine, leading to the formation of N6-(dimethylallyl)adenosine (i(6)A). The chain is tRNA dimethylallyltransferase from Nitratidesulfovibrio vulgaris (strain DSM 19637 / Miyazaki F) (Desulfovibrio vulgaris).